Reading from the N-terminus, the 339-residue chain is Anthranilate phosphoribosyltransferase (339 aa).

5-phospho-alpha-D-ribose 1-diphosphate contacts are provided by residues Gly-81, 84 to 85 (GD), Ser-89, 91 to 94 (NVST), 109 to 117 (KHGNRALSS), and Ala-121. Gly-81 provides a ligand contact to anthranilate. Ser-93 contributes to the Mg(2+) binding site. Asn-112 is a binding site for anthranilate. Arg-167 provides a ligand contact to anthranilate. Positions 226 and 227 each coordinate Mg(2+).

It belongs to the anthranilate phosphoribosyltransferase family. Homodimer. It depends on Mg(2+) as a cofactor.

The enzyme catalyses N-(5-phospho-beta-D-ribosyl)anthranilate + diphosphate = 5-phospho-alpha-D-ribose 1-diphosphate + anthranilate. Its pathway is amino-acid biosynthesis; L-tryptophan biosynthesis; L-tryptophan from chorismate: step 2/5. Its function is as follows. Catalyzes the transfer of the phosphoribosyl group of 5-phosphorylribose-1-pyrophosphate (PRPP) to anthranilate to yield N-(5'-phosphoribosyl)-anthranilate (PRA). The sequence is that of Anthranilate phosphoribosyltransferase from Rhodopseudomonas palustris (strain BisB18).